The following is a 1243-amino-acid chain: Serine/threonine-protein kinase/endoribonuclease IRE1 (1243 aa).

Residues 1–35 (MMRRPPSQGRWSASHQKLLLAFAFILIPWLQLADA) form the signal peptide. Residues 36-585 (QQQPQQPQIR…VKALPQSAAN (550 aa)) lie on the Lumenal side of the membrane. Disordered regions lie at residues 70-132 (HAAP…KPNY) and 149-172 (QPVRAPHTSRHHWPSSSAASGLAS). The span at 73 to 85 (PDVHPEAKFDTVN) shows a compositional bias: basic and acidic residues. The span at 90–99 (QQSTASPQQH) shows a compositional bias: polar residues. The span at 163 to 172 (SSSAASGLAS) shows a compositional bias: low complexity. Residues N226, N470, and N554 are each glycosylated (N-linked (GlcNAc...) asparagine). Residues 586–606 (SVIDFVSNPILIIFLIGSLIY) traverse the membrane as a helical segment. The Cytoplasmic portion of the chain corresponds to 607-1243 (NEKKLRRSYH…FREYYEPAGL (637 aa)). The tract at residues 638 to 765 (GDESGDDKDG…QSHENDPALT (128 aa)) is disordered. The span at 650–660 (PSSPSPRSQPQ) shows a compositional bias: low complexity. Basic and acidic residues predominate over residues 674-693 (ERNAGDQDKVKDNRSLHDVS). Basic residues predominate over residues 732-749 (KKKKAHRGRRGGVKHRKG). The Protein kinase domain occupies 809 to 1105 (VDTDVELGMG…SREVMAHPFF (297 aa)). Residues 815–823 (LGMGSNGTV) and K837 each bind ATP. ADP contacts are provided by S819, K837, E881, and C883. Residue D931 is the Proton acceptor of the active site. Mg(2+) contacts are provided by N936 and D953. Positions 1108 to 1240 (PKKRLAFLCD…TDRFREYYEP (133 aa)) constitute a KEN domain.

The protein belongs to the protein kinase superfamily. Ser/Thr protein kinase family. Mg(2+) serves as cofactor. In terms of processing, autophosphorylated mainly on serine residues; phosphorylation enables nucleotide binding by the active site.

It localises to the endoplasmic reticulum membrane. The catalysed reaction is L-seryl-[protein] + ATP = O-phospho-L-seryl-[protein] + ADP + H(+). It carries out the reaction L-threonyl-[protein] + ATP = O-phospho-L-threonyl-[protein] + ADP + H(+). Senses unfolded proteins in the lumen of the endoplasmic reticulum via its N-terminal domain which leads to enzyme auto-activation. The active endoribonuclease domain splices precursor mRNAs to produce their mature form which then induces transcription of UPR target genes. The chain is Serine/threonine-protein kinase/endoribonuclease IRE1 from Hypocrea jecorina (strain QM6a) (Trichoderma reesei).